Reading from the N-terminus, the 41-residue chain is Photosystem II reaction center protein X (41 aa).

Over 2 to 6 the chain is Lumenal; the sequence is TITPS. A helical membrane pass occupies residues 7 to 29; that stretch reads LKGFFIGLLSGAVVLGLTFAVLI. Over 30-41 the chain is Cytoplasmic; sequence AISQIDKVQRSL.

It belongs to the PsbX family. Type 1 subfamily. PSII is composed of 1 copy each of membrane proteins PsbA, PsbB, PsbC, PsbD, PsbE, PsbF, PsbH, PsbI, PsbJ, PsbK, PsbL, PsbM, PsbT, PsbX, PsbY, PsbZ, Psb30/Ycf12, peripheral proteins PsbO, CyanoQ (PsbQ), PsbU, PsbV and a large number of cofactors. It forms dimeric complexes. Part of a photosystem II (PSII) assembly intermediate complex PSII-I; crystallized from a strain deleted of psbJ, it forms monomeric PSII before addition of the oxygen evolving complex. PSII-I includes 3 assembly factors not found in mature PSII (Psb27, Psb28 and Psb34). It depends on PSII binds multiple chlorophylls, carotenoids and specific lipids. as a cofactor.

It is found in the cellular thylakoid membrane. In terms of biological role, involved in the binding and/or turnover of quinones at the Q(B) site of photosystem II (PSII). PSII is a light-driven water plastoquinone oxidoreductase, using light energy to abstract electrons from H(2)O, generating a proton gradient subsequently used for ATP formation. This Thermosynechococcus vestitus (strain NIES-2133 / IAM M-273 / BP-1) protein is Photosystem II reaction center protein X.